The following is a 332-amino-acid chain: Trans-2'-carboxybenzalpyruvate hydratase-aldolase (332 aa).

Lys178 (schiff-base intermediate with substrate) is an active-site residue.

It belongs to the DapA family. In terms of assembly, homotrimer.

It carries out the reaction (3Z)-4-(2-carboxyphenyl)-2-oxobut-3-enoate + H2O = 2-formylbenzoate + pyruvate. Its activity is regulated as follows. Not inhibited by sodium borohydride or sodium pyruvate. Unaffected by EDTA, EGTA, Mn(2+), Mg(2+) and Ca(2+). Functionally, plays a role in phenanthrene catabolism. Catalyzes the transformation of trans-2'-carboxbenzalpyruvate to 2-formylbenzoate and pyruvate. The chain is Trans-2'-carboxybenzalpyruvate hydratase-aldolase from Nocardioides sp. (strain KP7).